The following is an 88-amino-acid chain: uncharacterized protein (88 aa).

This is an uncharacterized protein from Mycobacterium tuberculosis (strain CDC 1551 / Oshkosh).